A 54-amino-acid chain; its full sequence is ATP synthase protein 8 (54 aa).

Residues 13-32 traverse the membrane as a helical segment; the sequence is ITFTFVIITLMVYILSKYIL.

It belongs to the ATPase protein 8 family. F-type ATPases have 2 components, CF(1) - the catalytic core - and CF(0) - the membrane proton channel.

The protein resides in the mitochondrion membrane. Mitochondrial membrane ATP synthase (F(1)F(0) ATP synthase or Complex V) produces ATP from ADP in the presence of a proton gradient across the membrane which is generated by electron transport complexes of the respiratory chain. F-type ATPases consist of two structural domains, F(1) - containing the extramembraneous catalytic core and F(0) - containing the membrane proton channel, linked together by a central stalk and a peripheral stalk. During catalysis, ATP synthesis in the catalytic domain of F(1) is coupled via a rotary mechanism of the central stalk subunits to proton translocation. Part of the complex F(0) domain. Minor subunit located with subunit a in the membrane. The sequence is that of ATP synthase protein 8 (atp-8) from Neurospora crassa (strain ATCC 24698 / 74-OR23-1A / CBS 708.71 / DSM 1257 / FGSC 987).